Here is a 131-residue protein sequence, read N- to C-terminus: C-glycoside deglycosidase beta subunit (131 aa).

The protein belongs to the C-glycoside deglycosidase beta subunit family. Heterodimer composed of an alpha subunit (CarB) and a beta subunit (CarC). Requires a divalent metal cation as cofactor.

It carries out the reaction 3''-dehydroisovitexin = 1,5-anhydro-D-erythro-hex-1-en-3-ulose + apigenin. It catalyses the reaction 3''-dehydroisoorientin = 1,5-anhydro-D-erythro-hex-1-en-3-ulose + luteolin. Functionally, carbon-carbon bond-cleaving enzyme which participates in the metabolism of C-glycosides. Acts on the C6-glycosylated compounds 3''-dehydroisovitexin (3''-oxo-isovitexin) and 3''-dehydroisoorientin (3''-oxo-homoorientin). Shows weak activity with 3'-dehydromangiferin (3'-oxo-mangiferin). In Microbacterium trichothecenolyticum (Aureobacterium trichothecenolyticum), this protein is C-glycoside deglycosidase beta subunit.